Here is a 186-residue protein sequence, read N- to C-terminus: Elongation factor P (186 aa).

It belongs to the elongation factor P family.

It is found in the cytoplasm. The protein operates within protein biosynthesis; polypeptide chain elongation. Functionally, involved in peptide bond synthesis. Stimulates efficient translation and peptide-bond synthesis on native or reconstituted 70S ribosomes in vitro. Probably functions indirectly by altering the affinity of the ribosome for aminoacyl-tRNA, thus increasing their reactivity as acceptors for peptidyl transferase. The polypeptide is Elongation factor P (Streptococcus pneumoniae (strain Hungary19A-6)).